Here is a 135-residue protein sequence, read N- to C-terminus: Small ribosomal subunit protein uS11 (135 aa).

The protein belongs to the universal ribosomal protein uS11 family. As to quaternary structure, part of the 30S ribosomal subunit. Interacts with proteins S7 and S18. Binds to IF-3.

In terms of biological role, located on the platform of the 30S subunit, it bridges several disparate RNA helices of the 16S rRNA. Forms part of the Shine-Dalgarno cleft in the 70S ribosome. The sequence is that of Small ribosomal subunit protein uS11 from Polynucleobacter necessarius subsp. necessarius (strain STIR1).